Reading from the N-terminus, the 271-residue chain is 3-methyl-2-oxobutanoate hydroxymethyltransferase (271 aa).

Residues Asp-53 and Asp-92 each coordinate Mg(2+). 3-methyl-2-oxobutanoate is bound by residues Asp-53–Ser-54, Asp-92, and Lys-120. Glu-122 contributes to the Mg(2+) binding site. Glu-189 acts as the Proton acceptor in catalysis.

Belongs to the PanB family. As to quaternary structure, homodecamer; pentamer of dimers. The cofactor is Mg(2+).

It is found in the cytoplasm. It catalyses the reaction 3-methyl-2-oxobutanoate + (6R)-5,10-methylene-5,6,7,8-tetrahydrofolate + H2O = 2-dehydropantoate + (6S)-5,6,7,8-tetrahydrofolate. The protein operates within cofactor biosynthesis; (R)-pantothenate biosynthesis; (R)-pantoate from 3-methyl-2-oxobutanoate: step 1/2. Catalyzes the reversible reaction in which hydroxymethyl group from 5,10-methylenetetrahydrofolate is transferred onto alpha-ketoisovalerate to form ketopantoate. The protein is 3-methyl-2-oxobutanoate hydroxymethyltransferase of Burkholderia thailandensis (strain ATCC 700388 / DSM 13276 / CCUG 48851 / CIP 106301 / E264).